Here is a 397-residue protein sequence, read N- to C-terminus: Translocase of chloroplast 34 homolog, chloroplastic (397 aa).

The segment at 1-72 is disordered; sequence MAQPPRPAEE…SQPWAGLNRL (72 aa). 2 stretches are compositionally biased toward acidic residues: residues 10-32 and 44-63; these read EYDDDVQEDEDELKEGELDDDES and AGDEEAEDDEQDEEDGDEDS. Positions 90–321 constitute an AIG1-type G domain; it reads RKQLTVLLLG…YKYHPRLSSK (232 aa). Residues 99–106 form a G1 region; that stretch reads GKSSVGKS. Residues 102-107 and 121-126 each bind GTP; these read SVGKSS and QAFKLQ. Residue Ser-106 coordinates Mg(2+). Positions 121 to 124 are homodimerization; the sequence is QAFK. A G2 region spans residues 126–130; it reads QADTD. The segment at 155-158 is G3; the sequence is DTCG. A homodimerization region spans residues 193–198; the sequence is RLDLYR. The segment at 227–230 is G4; it reads THAN. GTP contacts are provided by residues His-228 and 271–272; that span reads EN. Residues 271-273 form a G5 region; sequence ENS. The chain crosses the membrane as a helical span at residues 329 to 349; it reads LLPVAIAAEVLFYRRFLHPRL. The AKR2A-binding sequence (ABS) required for chloroplast outer envelope membrane targeting signature appears at 350-358; the sequence is DDNQRRVER.

It belongs to the TRAFAC class TrmE-Era-EngA-EngB-Septin-like GTPase superfamily. AIG1/Toc34/Toc159-like paraseptin GTPase family. TOC34 subfamily. Homodimer, heterodimer with other TOC proteins, and monomer. Part of the TOC core complex that includes 1 protein for the specific recognition of transit peptides surrounded by a ring composed of four proteins forming translocation channels, and four to five GTP-binding proteins providing energy. This core complex can interact with components of the TIC complex to form a larger import complex. Interacts with ARSA1. It depends on Mg(2+) as a cofactor.

It localises to the plastid. Its subcellular location is the chloroplast outer membrane. Its function is as follows. GTPase involved in protein precursor import into chloroplasts. Seems to recognize chloroplast-destined precursor proteins and regulate their presentation to the translocation channel through GTP hydrolysis. Functions as an essential component of the outer chloroplast membrane translocon (TOC) complex, which, in turn, catalyzes the import of nucleus-encoded precursor polypeptides from the cytoplasm to the chloroplast. The sequence is that of Translocase of chloroplast 34 homolog, chloroplastic from Chlamydomonas reinhardtii (Chlamydomonas smithii).